A 239-amino-acid polypeptide reads, in one-letter code: Sugar fermentation stimulation protein homolog (239 aa).

This sequence belongs to the SfsA family.

The polypeptide is Sugar fermentation stimulation protein homolog (Desulforamulus reducens (strain ATCC BAA-1160 / DSM 100696 / MI-1) (Desulfotomaculum reducens)).